The sequence spans 216 residues: Guanylate kinase (216 aa).

The Guanylate kinase-like domain occupies 15–193; the sequence is GNLFMVVAPS…ALEELRNVVR (179 aa). 22–29 is an ATP binding site; the sequence is APSGAGKS.

It belongs to the guanylate kinase family.

Its subcellular location is the cytoplasm. It catalyses the reaction GMP + ATP = GDP + ADP. Functionally, essential for recycling GMP and indirectly, cGMP. The chain is Guanylate kinase from Cupriavidus pinatubonensis (strain JMP 134 / LMG 1197) (Cupriavidus necator (strain JMP 134)).